We begin with the raw amino-acid sequence, 159 residues long: Elicitor-responsive protein 1 (159 aa).

The C2 domain occupies 1-112 (MAGSGVLEVH…SLGMEHGTWE (112 aa)). 2 residues coordinate Ca(2+): Asp21 and Asp30. A Phosphoserine; by CPK modification is found at Ser44. Ca(2+)-binding residues include Asp81, Asp83, Ser86, and Asp89.

Requires Ca(2+) as cofactor. Post-translationally, phosphorylated at Ser-44 by CPK18 in a calcium-dependent manner. As to expression, isoform 2 is expressed in young vascular tissues and tiller buds.

It localises to the cytoplasm. Its subcellular location is the cell membrane. Its function is as follows. May play a role in plant defense signaling. Isoform 2 binds to phospholipids in a Ca(2+)-dependent manner in response to pathogen elicitors. The protein is Elicitor-responsive protein 1 (ERG1) of Oryza sativa subsp. japonica (Rice).